A 549-amino-acid polypeptide reads, in one-letter code: Cytoplasmic trehalase (549 aa).

Substrate is bound by residues Arg-168, 175-176, Asn-212, 221-223, 292-294, and Gly-324; these read WD, RSQ, and RDE. Catalysis depends on proton donor/acceptor residues Asp-326 and Glu-509. Residue Glu-525 participates in substrate binding.

It belongs to the glycosyl hydrolase 37 family. As to quaternary structure, monomer.

Its subcellular location is the cytoplasm. The catalysed reaction is alpha,alpha-trehalose + H2O = alpha-D-glucose + beta-D-glucose. It participates in glycan degradation; trehalose degradation; D-glucose from alpha,alpha-trehalose: step 1/1. In terms of biological role, hydrolyzes trehalose to glucose. Could be involved, in cells returning to low osmolarity conditions, in the utilization of the accumulated cytoplasmic trehalose, which was synthesized in response to high osmolarity. The sequence is that of Cytoplasmic trehalase from Escherichia coli (strain 55989 / EAEC).